The primary structure comprises 377 residues: Carboxynorspermidine/carboxyspermidine decarboxylase (377 aa).

At Lys-41 the chain carries N6-(pyridoxal phosphate)lysine. Residues Glu-238 and Asp-274 each contribute to the substrate site.

The protein belongs to the Orn/Lys/Arg decarboxylase class-II family. NspC subfamily. Homodimer. It depends on pyridoxal 5'-phosphate as a cofactor.

It is found in the cytoplasm. It carries out the reaction carboxynorspermidine + H(+) = norspermidine + CO2. It catalyses the reaction carboxyspermidine + H(+) = spermidine + CO2. Its function is as follows. Catalyzes the decarboxylation of carboxynorspermidine and carboxyspermidine. Carboxynorspermidine is decarboxylated 20-fold more efficiently than carboxyspermidine. Exhibits some activity with L-ornithine, but shows no activity with L-arginine, L-lysine or meso-diaminopimelate. The protein is Carboxynorspermidine/carboxyspermidine decarboxylase of Vibrio vulnificus (strain CMCP6).